Reading from the N-terminus, the 292-residue chain is NAD kinase (292 aa).

Catalysis depends on Asp73, which acts as the Proton acceptor. NAD(+)-binding positions include 73 to 74 (DG), 147 to 148 (NE), His158, Arg175, Asp177, 188 to 193 (TAYSLS), and Gln247.

It belongs to the NAD kinase family. A divalent metal cation is required as a cofactor.

It localises to the cytoplasm. The enzyme catalyses NAD(+) + ATP = ADP + NADP(+) + H(+). In terms of biological role, involved in the regulation of the intracellular balance of NAD and NADP, and is a key enzyme in the biosynthesis of NADP. Catalyzes specifically the phosphorylation on 2'-hydroxyl of the adenosine moiety of NAD to yield NADP. This Shigella boydii serotype 4 (strain Sb227) protein is NAD kinase.